The chain runs to 275 residues: Adenylate kinase (275 aa).

Glycine 54 to threonine 59 contacts ATP. Residues alanine 74 to valine 103 form an NMP region. Residues threonine 75, arginine 80, glycine 101–valine 103, glycine 130–arginine 133, and glutamine 137 each bind AMP. Residues glycine 171 to aspartate 208 are LID. ATP is bound by residues arginine 172 and serine 181–tyrosine 182. The AMP site is built by arginine 205 and arginine 216. An ATP-binding site is contributed by glutamine 244.

The protein belongs to the adenylate kinase family. AK2 subfamily. As to quaternary structure, monomer.

The protein resides in the cytoplasm. It localises to the cytosol. The protein localises to the mitochondrion intermembrane space. It catalyses the reaction AMP + ATP = 2 ADP. Catalyzes the reversible transfer of the terminal phosphate group between ATP and AMP. Plays an important role in cellular energy homeostasis and in adenine nucleotide metabolism. Adenylate kinase activity is critical for regulation of the phosphate utilization and the AMP de novo biosynthesis pathways. This Botryotinia fuckeliana (strain B05.10) (Noble rot fungus) protein is Adenylate kinase (adk1).